The chain runs to 108 residues: Insulin (108 aa).

Residues 1-21 (MAVWIQAGALLFLLAVSSVNA) form the signal peptide. 3 disulfide bridges follow: Cys-30-Cys-94, Cys-42-Cys-107, and Cys-93-Cys-98. The propeptide at 54–85 (DVDPPLGFLPPKSAQETEVADFAFKDHAEVIR) is c peptide.

It belongs to the insulin family. In terms of assembly, heterodimer of a B chain and an A chain linked by two disulfide bonds.

The protein resides in the secreted. In terms of biological role, insulin decreases blood glucose concentration. It increases cell permeability to monosaccharides, amino acids and fatty acids. It accelerates glycolysis, the pentose phosphate cycle, and glycogen synthesis in liver. This Cyprinus carpio (Common carp) protein is Insulin (ins).